An 85-amino-acid chain; its full sequence is Large ribosomal subunit protein bL27 (85 aa).

Residues 1–20 (MAHKKAGGSTRNGRDSEAKR) are disordered.

The protein belongs to the bacterial ribosomal protein bL27 family.

The protein is Large ribosomal subunit protein bL27 of Serratia proteamaculans (strain 568).